A 108-amino-acid polypeptide reads, in one-letter code: Inner membrane protein H108R (108 aa).

Residues 10-32 (LIVIITILITTRELSTTMLIVSL) traverse the membrane as a helical segment. Residues 49 to 64 (ENNTFSMPQKNSFSES) show a composition bias toward polar residues. The disordered stretch occupies residues 49-69 (ENNTFSMPQKNSFSESYNKDK). The N-linked (GlcNAc...) asparagine; by host glycan is linked to Asn-50.

Belongs to the asfivirus H108R family.

It localises to the virion membrane. This Ornithodoros (relapsing fever ticks) protein is Inner membrane protein H108R.